The primary structure comprises 1802 residues: Bromodomain and WD repeat-containing protein 3 (1802 aa).

WD repeat units follow at residues isoleucine 170–threonine 209, arginine 213–leucine 251, alanine 255–tryptophan 297, arginine 307–leucine 347, glutamate 353–tyrosine 393, serine 400–serine 452, glutamine 456–leucine 495, and arginine 502–phenylalanine 542. Serine 693 and serine 703 each carry phosphoserine. The disordered stretch occupies residues lysine 768–glycine 910. Residues serine 785–histidine 795 show a composition bias toward basic residues. Residues threonine 796–glutamine 817 are compositionally biased toward polar residues. Positions glutamate 818 to threonine 829 are enriched in acidic residues. Residues serine 846–aspartate 859 are compositionally biased toward low complexity. Residues serine 885 and serine 886 each carry the phosphoserine modification. A compositionally biased stretch (basic and acidic residues) spans glutamate 889–glutamine 898. Over residues lysine 899–glycine 909 the composition is skewed to basic residues. The Bromo 1 domain occupies tryptophan 1138–glutamine 1245. 4 disordered regions span residues arginine 1262 to arginine 1292, arginine 1326 to aspartate 1361, isoleucine 1438 to serine 1500, and serine 1520 to arginine 1725. Residues aspartate 1266–serine 1278 show a composition bias toward acidic residues. The Bromo 2 domain occupies cysteine 1300 to isoleucine 1430. Residues glutamine 1441–arginine 1453 are compositionally biased toward basic residues. The segment covering serine 1454–lysine 1468 has biased composition (low complexity). The span at lysine 1479–valine 1499 shows a compositional bias: polar residues. Over residues serine 1520–serine 1533 the composition is skewed to low complexity. A phosphoserine mark is found at serine 1577 and serine 1579. The span at glycine 1587–histidine 1600 shows a compositional bias: basic and acidic residues. Positions leucine 1601–glutamate 1626 are enriched in low complexity. Basic and acidic residues predominate over residues serine 1627–serine 1643. Composition is skewed to basic residues over residues arginine 1649–lysine 1666 and arginine 1684–arginine 1697. Serine 1763 is subject to Phosphoserine.

Found in most adult tissues. Down-regulated in a majority of the B-CLL cases examined.

Functionally, plays a role in the regulation of cell morphology and cytoskeletal organization. Required in the control of cell shape. The protein is Bromodomain and WD repeat-containing protein 3 (BRWD3) of Homo sapiens (Human).